The following is a 100-amino-acid chain: MIREERLLKVLKAPHISEKSTMVAEKQNTIVFKIAVDATKAEVKAAVAKLFEVEVETVRTLNMKGKTKRSGARVGRRSDWKKAYVTLKAGQDIDFMGAAE.

Belongs to the universal ribosomal protein uL23 family. Part of the 50S ribosomal subunit. Contacts protein L29, and trigger factor when it is bound to the ribosome.

Functionally, one of the early assembly proteins it binds 23S rRNA. One of the proteins that surrounds the polypeptide exit tunnel on the outside of the ribosome. Forms the main docking site for trigger factor binding to the ribosome. This chain is Large ribosomal subunit protein uL23, found in Aeromonas salmonicida (strain A449).